Here is a 217-residue protein sequence, read N- to C-terminus: 3,4-dihydroxy-2-butanone 4-phosphate synthase (217 aa).

D-ribulose 5-phosphate contacts are provided by residues 37 to 38 (RE), D42, 150 to 154 (RGGHT), and E174. Mg(2+) is bound at residue E38. Residue H153 coordinates Mg(2+).

The protein belongs to the DHBP synthase family. In terms of assembly, homodimer. Mg(2+) is required as a cofactor. Mn(2+) serves as cofactor.

The enzyme catalyses D-ribulose 5-phosphate = (2S)-2-hydroxy-3-oxobutyl phosphate + formate + H(+). Its pathway is cofactor biosynthesis; riboflavin biosynthesis; 2-hydroxy-3-oxobutyl phosphate from D-ribulose 5-phosphate: step 1/1. Functionally, catalyzes the conversion of D-ribulose 5-phosphate to formate and 3,4-dihydroxy-2-butanone 4-phosphate. The sequence is that of 3,4-dihydroxy-2-butanone 4-phosphate synthase from Shigella boydii serotype 18 (strain CDC 3083-94 / BS512).